Reading from the N-terminus, the 124-residue chain is Small ribosomal subunit protein bS6 (124 aa).

Belongs to the bacterial ribosomal protein bS6 family.

Binds together with bS18 to 16S ribosomal RNA. The polypeptide is Small ribosomal subunit protein bS6 (Haemophilus ducreyi (strain 35000HP / ATCC 700724)).